The primary structure comprises 272 residues: Short-chain dehydrogenase srdC (272 aa).

NADP(+) contacts are provided by I15, D65, R127, Y173, K177, V206, and T208. The active-site Proton donor is the Y173. K177 serves as the catalytic Lowers pKa of active site Tyr.

Belongs to the short-chain dehydrogenases/reductases (SDR) family.

Short-chain dehydrogenase; part of the gene cluster that mediates the biosynthesis of sordarial, a salicylic aldehyde structurally related to the phytotoxin pyriculol. The most interesting aspect of this pathway is formation of an aromatic product from the highly reducing polyketide synthase srdA. SrdA synthesizes a reduced polyketide chain from one molecule of acetyl-CoA and five molecules of malonyl-CoA. The polyketide chain is then reductively released as an aldehyde. The oxidoreductases srdC, srdD and srdE then oxidize one of the hydroxy groups to facilitate the intramolecular aldol condensation, followed by dehydration to yield a salicylic aldehyde. This aldehyde can undergo facile reduction by endogenous reductases to yield the alcohol 1-hydroxy-2-hydroxymethyl-3-pent-1,3-dienylbenzene. The flavin-dependent srdI counteract against the propensity of the aldehydes to be reduced under physiological conditions and is responsible for reoxidizing 1-hydroxy-2-hydroxymethyl-3-pent-1,3-dienylbenzene back to the salicylic aldehyde. This salicylic aldehyde is then selectively epoxidized by the cupin-domain-containing oxidoreductase srdB to yield the epoxide, which can be hydrolyzed stereoselectively by the hydrolase srdG to give the final product sordarial. In Neurospora crassa (strain ATCC 24698 / 74-OR23-1A / CBS 708.71 / DSM 1257 / FGSC 987), this protein is Short-chain dehydrogenase srdC.